Consider the following 415-residue polypeptide: NADH-quinone oxidoreductase subunit D (415 aa).

This sequence belongs to the complex I 49 kDa subunit family. As to quaternary structure, NDH-1 is composed of 14 different subunits. Subunits NuoB, C, D, E, F, and G constitute the peripheral sector of the complex.

It localises to the cell inner membrane. The enzyme catalyses a quinone + NADH + 5 H(+)(in) = a quinol + NAD(+) + 4 H(+)(out). Functionally, NDH-1 shuttles electrons from NADH, via FMN and iron-sulfur (Fe-S) centers, to quinones in the respiratory chain. The immediate electron acceptor for the enzyme in this species is believed to be ubiquinone. Couples the redox reaction to proton translocation (for every two electrons transferred, four hydrogen ions are translocated across the cytoplasmic membrane), and thus conserves the redox energy in a proton gradient. The sequence is that of NADH-quinone oxidoreductase subunit D from Myxococcus xanthus (strain DK1622).